Here is a 543-residue protein sequence, read N- to C-terminus: Membrane protein insertase YidC (543 aa).

The helical transmembrane segment at 7-27 threads the bilayer; it reads FLLIGLAMVSFLLWQQWQVDY. A disordered region spans residues 30-61; sequence QPAQPVESQQTTGSDAPNSNGDVPIATPTNKS. Residues 35–61 are compositionally biased toward polar residues; the sequence is VESQQTTGSDAPNSNGDVPIATPTNKS. The next 4 helical transmembrane spans lie at 341–361, 421–441, 451–471, and 499–519; these read FAFL…IILI, GGCF…WVLL, FIFW…PILT, and PVAM…YWLI.

It belongs to the OXA1/ALB3/YidC family. Type 1 subfamily. As to quaternary structure, interacts with the Sec translocase complex via SecD. Specifically interacts with transmembrane segments of nascent integral membrane proteins during membrane integration.

The protein resides in the cell inner membrane. Required for the insertion and/or proper folding and/or complex formation of integral membrane proteins into the membrane. Involved in integration of membrane proteins that insert both dependently and independently of the Sec translocase complex, as well as at least some lipoproteins. Aids folding of multispanning membrane proteins. In Pseudoalteromonas atlantica (strain T6c / ATCC BAA-1087), this protein is Membrane protein insertase YidC.